The sequence spans 525 residues: GMP synthase [glutamine-hydrolyzing] (525 aa).

A Glutamine amidotransferase type-1 domain is found at 9–207 (RILILDFGSQ…VLDICQCEAL (199 aa)). C86 functions as the Nucleophile in the catalytic mechanism. Residues H181 and E183 contribute to the active site. Positions 208-400 (WTPAKIIDDA…LGLPYNMLYR (193 aa)) constitute a GMPS ATP-PPase domain. 235–241 (SGGVDSS) serves as a coordination point for ATP.

In terms of assembly, homodimer.

It carries out the reaction XMP + L-glutamine + ATP + H2O = GMP + L-glutamate + AMP + diphosphate + 2 H(+). Its pathway is purine metabolism; GMP biosynthesis; GMP from XMP (L-Gln route): step 1/1. In terms of biological role, catalyzes the synthesis of GMP from XMP. The protein is GMP synthase [glutamine-hydrolyzing] of Pectobacterium atrosepticum (strain SCRI 1043 / ATCC BAA-672) (Erwinia carotovora subsp. atroseptica).